Reading from the N-terminus, the 370-residue chain is Phosphate acyltransferase (370 aa).

Residues Ser349–Arg370 form a disordered region.

This sequence belongs to the PlsX family. In terms of assembly, homodimer. Probably interacts with PlsY.

Its subcellular location is the cytoplasm. It catalyses the reaction a fatty acyl-[ACP] + phosphate = an acyl phosphate + holo-[ACP]. It participates in lipid metabolism; phospholipid metabolism. Functionally, catalyzes the reversible formation of acyl-phosphate (acyl-PO(4)) from acyl-[acyl-carrier-protein] (acyl-ACP). This enzyme utilizes acyl-ACP as fatty acyl donor, but not acyl-CoA. This chain is Phosphate acyltransferase, found in Cereibacter sphaeroides (strain ATCC 17029 / ATH 2.4.9) (Rhodobacter sphaeroides).